The primary structure comprises 598 residues: MFS siderochrome iron transporter D (598 aa).

Positions 1–34 are disordered; it reads MLSSWQKKFFQTPEHPPAEGIAPPRDDGVPNPEP. The Cytoplasmic portion of the chain corresponds to 1-76; the sequence is MLSSWQKKFF…AEAITLTWSK (76 aa). The helical transmembrane segment at 77 to 97 threads the bilayer; it reads ISLGAAYFLMWLLYLVNGFQA. At 98-115 the chain is on the extracellular side; the sequence is SITGNLSAYVTSGFESHS. N-linked (GlcNAc...) asparagine glycosylation is present at Asn102. A helical membrane pass occupies residues 116-136; that stretch reads LIPVISIVSSVMSAATYMPLA. Topologically, residues 137-144 are cytoplasmic; it reads KVLNLWDR. A helical membrane pass occupies residues 145-165; the sequence is SIGFIIMVAFATLGLILSATC. At 166–171 the chain is on the extracellular side; sequence HDIGTY. A helical transmembrane segment spans residues 172-192; the sequence is CAAQVFYSIGFAGIIFSVDVI. The Cytoplasmic portion of the chain corresponds to 193–203; sequence TADTSTLRDRG. Residues 204–224 traverse the membrane as a helical segment; that stretch reads LAYAFTSSPYIITAFGGPAAA. The Extracellular portion of the chain corresponds to 225–233; sequence EHFYDSNWR. A helical transmembrane segment spans residues 234 to 254; the sequence is WAYGCFSIVLPVVALPMFCLL. The Cytoplasmic portion of the chain corresponds to 255–289; the sequence is RWNRHKAKKSGLLKDKADSGRTWMESIRHYIIEFD. The helical transmembrane segment at 290-310 threads the bilayer; that stretch reads ILGVFFLAAGLVLFLLPFSIA. Topologically, residues 311–318 are extracellular; that stretch reads GSTEDDWK. The helical transmembrane segment at 319–339 threads the bilayer; that stretch reads SASIITMLVIGFVCLLVFALV. Residues 340–341 lie on the Cytoplasmic side of the membrane; the sequence is ER. A helical transmembrane segment spans residues 342–362; that stretch reads FVAPVPFLPWALLASRTVLGA. At 363-396 the chain is on the extracellular side; the sequence is CMLDVCYQIAYYCWFNYYTSYLQVVYGTSITTAG. The chain crosses the membrane as a helical span at residues 397 to 417; that stretch reads YITSIFDVVSGVWLFIVGFLI. Residues 418–424 lie on the Cytoplasmic side of the membrane; that stretch reads KKTNRFR. A helical transmembrane segment spans residues 425-445; it reads WLLFIAVPLYILGVGLMIYFR. The Extracellular portion of the chain corresponds to 446 to 450; the sequence is KPSWS. The chain crosses the membrane as a helical span at residues 451–471; it reads VGYMIMCQIFIAFAGGTMIIC. The Cytoplasmic segment spans residues 472–490; sequence QQVAVLAASDHDHAASSLA. Residues 491-511 traverse the membrane as a helical segment; that stretch reads FLNVFGTMGSAVGSSISGAIW. The Extracellular portion of the chain corresponds to 512–562; sequence THTLPGALQRLLPDSVKADWQTIYDSLEEQLSYERGTLIRQAIALAYASTQ. Residues 563–583 traverse the membrane as a helical segment; that stretch reads SKMLIAGTAIMALSLVWMFVI. At 584 to 598 the chain is on the cytoplasmic side; that stretch reads RDIKLTKTQTKGVLF.

This sequence belongs to the major facilitator superfamily.

Its subcellular location is the cell membrane. Major facilitator transporter involved in fusarinine C (FsC) uptake. In contrast to TAFC-mediated iron uptake, FsC-mediated iron uptake via mirD does not play a significant role during infection. The chain is MFS siderochrome iron transporter D from Aspergillus fumigatus (strain ATCC MYA-4609 / CBS 101355 / FGSC A1100 / Af293) (Neosartorya fumigata).